A 248-amino-acid polypeptide reads, in one-letter code: Gamma-glutamyl peptidase 2 (248 aa).

The Glutamine amidotransferase type-1 domain occupies 17–212; that stretch reads SEFVKEMYGG…IDRVHKIKFV (196 aa). The active-site Nucleophile is the cysteine 101. Active-site residues include histidine 191 and glutamate 193.

It belongs to the peptidase C26 family.

It is found in the cytoplasm. The protein localises to the cytosol. It catalyses the reaction an S-[(1E)-1-(hydroxyimino)-omega-(methylsulfanyl)alkyl]-L-glutathione + H2O = an S-[(1E)-1-(hydroxyimino)-omega-(methylsulfanyl)alkyl]-L-cysteinylglycine + L-glutamate. The catalysed reaction is (E)-1-(glutathione-S-yl)-2-(1H-indol-3-yl)acetohydroximate + H2O = (E)-1-(glycyl-L-cystein-S-yl)-2-(1H-indol-3-yl)acetohydroximate + L-glutamate. The enzyme catalyses 2-(glutathion-S-yl)-2-(1H-indol-3-yl)acetonitrile + H2O = 2-(glycyl-L-cystein-S-yl)-2-(1H-indol-3-yl)acetonitrile + L-glutamate. It carries out the reaction (Z)-1-(glutathione-S-yl)-2-phenylacetohydroximate + H2O = (Z)-1-(glycyl-L-cystein-S-yl)-2-phenylacetohydroximate + L-glutamate. It functions in the pathway secondary metabolite biosynthesis. In terms of biological role, involved in glucosinolate biosynthesis. Hydrolyzes the gamma-glutamyl peptide bond of several glutathione (GSH) conjugates to produce Cys-Gly conjugates related to glucosinolates. The gamma-Glu-Cys-Gly-GSH conjugates are the sulfur-donating molecule in glucosinolate biosynthesis. This chain is Gamma-glutamyl peptidase 2, found in Arabidopsis thaliana (Mouse-ear cress).